We begin with the raw amino-acid sequence, 230 residues long: Fibrillarin-like rRNA/tRNA 2'-O-methyltransferase (230 aa).

S-adenosyl-L-methionine contacts are provided by residues 87-88 (TT), 105-106 (EF), 130-131 (DA), and 150-153 (DVAQ).

The protein belongs to the methyltransferase superfamily. Fibrillarin family. Interacts with nop5. Component of box C/D small ribonucleoprotein (sRNP) particles that contain rpl7ae, FlpA and nop5, plus a guide RNA.

Functionally, involved in pre-rRNA and tRNA processing. Utilizes the methyl donor S-adenosyl-L-methionine to catalyze the site-specific 2'-hydroxyl methylation of ribose moieties in rRNA and tRNA. Site specificity is provided by a guide RNA that base pairs with the substrate. Methylation occurs at a characteristic distance from the sequence involved in base pairing with the guide RNA. This chain is Fibrillarin-like rRNA/tRNA 2'-O-methyltransferase, found in Methanococcus vannielii (strain ATCC 35089 / DSM 1224 / JCM 13029 / OCM 148 / SB).